The chain runs to 85 residues: MKVTLIAILTCAAVLVLHTTAAEELEAESQLMEVGMPDTELAAVDEERLFECSVSCEIEKEGNKDCKKKKCIGGWKCKFNMCVKV.

The signal sequence occupies residues 1–22; sequence MKVTLIAILTCAAVLVLHTTAA. A propeptide spanning residues 23–48 is cleaved from the precursor; it reads EELEAESQLMEVGMPDTELAAVDEER. Disulfide bonds link Cys-52-Cys-66, Cys-56-Cys-77, and Cys-71-Cys-82.

Belongs to the neurotoxin 12 (Hwtx-2) family. 02 (Hwtx-2) subfamily. In terms of tissue distribution, expressed by the venom gland.

It is found in the secreted. Functionally, postsynaptic neurotoxin. The sequence is that of U4-theraphotoxin-Hhn1h from Cyriopagopus hainanus (Chinese bird spider).